The sequence spans 363 residues: Cyclin-D1-1 (363 aa).

A disordered region spans residues 39–77 (ELEREGEPAQGSSPSSSLSCAAAAAAAADDDDEDEDEHG). The segment covering 50–65 (SSPSSSLSCAAAAAAA) has biased composition (low complexity). The segment covering 66–75 (ADDDDEDEDE) has biased composition (acidic residues).

The protein belongs to the cyclin family. Cyclin D subfamily.

The sequence is that of Cyclin-D1-1 (CYCD1-1) from Oryza sativa subsp. japonica (Rice).